The following is a 159-amino-acid chain: MRCPFCGSEDTQVKDSRPAEDNTSIRRRRICPDCGGRFTTYERVQLRELMVIKKSGRKLPFDREKLVRSFEIALRKRPVDRDRIERAVSGIARRLESSGETEIPSEEIGLQVLEALKSLDDVAFVRYASVYRDFSHAEDFENVIAEINAKIARDTDAGA.

Residues 1–22 form a disordered region; that stretch reads MRCPFCGSEDTQVKDSRPAEDN. Residues 3–34 fold into a zinc finger; it reads CPFCGSEDTQVKDSRPAEDNTSIRRRRICPDC. Residues 11-22 show a composition bias toward basic and acidic residues; that stretch reads TQVKDSRPAEDN. The region spanning 49–139 is the ATP-cone domain; it reads LMVIKKSGRK…VYRDFSHAED (91 aa).

This sequence belongs to the NrdR family. It depends on Zn(2+) as a cofactor.

Its function is as follows. Negatively regulates transcription of bacterial ribonucleotide reductase nrd genes and operons by binding to NrdR-boxes. In Agrobacterium fabrum (strain C58 / ATCC 33970) (Agrobacterium tumefaciens (strain C58)), this protein is Transcriptional repressor NrdR.